The following is an 80-amino-acid chain: Conotoxin SIVB (80 aa).

The N-terminal stretch at 1-21 (MGMRMMFTVFLSVVLATTVVS) is a signal peptide. Positions 22-38 (TPSDRASDGRNAAVHER) are excised as a propeptide. Glutamine 39 carries the pyrrolidone carboxylic acid modification. O-linked (HexNAc...) serine glycosylation occurs at serine 45. 4-hydroxyproline is present on residues proline 55, proline 60, proline 61, proline 69, proline 72, and proline 75. At proline 75 the chain carries Proline amide. Residues 76-80 (GRRND) constitute a propeptide that is removed on maturation.

The protein belongs to the conotoxin A superfamily. Post-translationally, contains 3 disulfide bonds. In terms of processing, O-linked glycan consists of Hex3-HexNAc2 pentasaccharide. As to expression, expressed by the venom duct.

It localises to the secreted. Functionally, neurotoxin with probable activity on sodium channel. Induces intense repetitive firing of the frog neuromuscular junction, leading to a tetanic contracture in muscle fiber (spastic paralysis). In vivo, shows the same effect as the whole venom when injected on fish prey. The polypeptide is Conotoxin SIVB (Conus striatus (Striated cone)).